The chain runs to 337 residues: UPF0252 protein PH1321 (337 aa).

Residues 100-120 form a helical membrane-spanning segment; sequence IIGMLFLVFIILPAITSNLWS.

The protein belongs to the UPF0252 family.

Its subcellular location is the membrane. The chain is UPF0252 protein PH1321 from Pyrococcus horikoshii (strain ATCC 700860 / DSM 12428 / JCM 9974 / NBRC 100139 / OT-3).